Reading from the N-terminus, the 306-residue chain is Pyridoxal 5'-phosphate synthase subunit PdxS (306 aa).

Aspartate 36 serves as a coordination point for D-ribose 5-phosphate. The Schiff-base intermediate with D-ribose 5-phosphate role is filled by lysine 93. Glycine 165 is a binding site for D-ribose 5-phosphate. Residue arginine 177 coordinates D-glyceraldehyde 3-phosphate. D-ribose 5-phosphate contacts are provided by residues glycine 226 and 247–248; that span reads GS.

This sequence belongs to the PdxS/SNZ family. In the presence of PdxT, forms a dodecamer of heterodimers.

It catalyses the reaction aldehydo-D-ribose 5-phosphate + D-glyceraldehyde 3-phosphate + L-glutamine = pyridoxal 5'-phosphate + L-glutamate + phosphate + 3 H2O + H(+). The protein operates within cofactor biosynthesis; pyridoxal 5'-phosphate biosynthesis. Catalyzes the formation of pyridoxal 5'-phosphate from ribose 5-phosphate (RBP), glyceraldehyde 3-phosphate (G3P) and ammonia. The ammonia is provided by the PdxT subunit. Can also use ribulose 5-phosphate and dihydroxyacetone phosphate as substrates, resulting from enzyme-catalyzed isomerization of RBP and G3P, respectively. The sequence is that of Pyridoxal 5'-phosphate synthase subunit PdxS from Salinispora arenicola (strain CNS-205).